Here is a 466-residue protein sequence, read N- to C-terminus: Neuraminidase (466 aa).

The Intravirion segment spans residues 1 to 11; that stretch reads MLPSTIQTLTL. The chain crosses the membrane as a helical span at residues 12-34; it reads FLTSGGVLLSLYVSASLSYLLYS. Residues 13 to 35 form an involved in apical transport and lipid raft association region; the sequence is LTSGGVLLSLYVSASLSYLLYSD. At 35 to 466 the chain is on the virion surface side; that stretch reads DILLKFSPTK…DTVTGVDMAL (432 aa). The segment at 38–86 is hypervariable stalk region; that stretch reads LKFSPTKRTAPTMSLECVNVSNAQAVNHSATKEMTFLLPEPEWTYPRLS. N-linked (GlcNAc...) asparagine; by host glycans are attached at residues N56 and N64. 8 disulfides stabilise this stretch: C87–C420, C122–C127, C182–C229, C231–C236, C277–C291, C279–C289, C318–C337, and C424–C447. Positions 89–466 are head of neuraminidase; the sequence is GSTFQKALLI…DTVTGVDMAL (378 aa). Residue R116 coordinates substrate. N-linked (GlcNAc...) asparagine; by host glycosylation is present at N144. D149 acts as the Proton donor/acceptor in catalysis. R150 lines the substrate pocket. 275–276 serves as a coordination point for substrate; it reads EE. An N-linked (GlcNAc...) asparagine; by host glycan is attached at N284. R292 contacts substrate. Ca(2+) is bound by residues D293 and D324. Residue R374 participates in substrate binding. Y409 acts as the Nucleophile in catalysis.

Belongs to the glycosyl hydrolase 34 family. In terms of assembly, homotetramer. Requires Ca(2+) as cofactor. N-glycosylated.

The protein resides in the virion membrane. Its subcellular location is the host apical cell membrane. It catalyses the reaction Hydrolysis of alpha-(2-&gt;3)-, alpha-(2-&gt;6)-, alpha-(2-&gt;8)- glycosidic linkages of terminal sialic acid residues in oligosaccharides, glycoproteins, glycolipids, colominic acid and synthetic substrates.. Its activity is regulated as follows. Inhibited by the neuraminidase inhibitors zanamivir (Relenza) and oseltamivir (Tamiflu). These drugs interfere with the release of progeny virus from infected cells and are effective against all influenza strains. Resistance to neuraminidase inhibitors is quite rare. In terms of biological role, catalyzes the removal of terminal sialic acid residues from viral and cellular glycoconjugates. Cleaves off the terminal sialic acids on the glycosylated HA during virus budding to facilitate virus release. Additionally helps virus spread through the circulation by further removing sialic acids from the cell surface. These cleavages prevent self-aggregation and ensure the efficient spread of the progeny virus from cell to cell. Otherwise, infection would be limited to one round of replication. Described as a receptor-destroying enzyme because it cleaves a terminal sialic acid from the cellular receptors. May facilitate viral invasion of the upper airways by cleaving the sialic acid moieties on the mucin of the airway epithelial cells. Likely to plays a role in the budding process through its association with lipid rafts during intracellular transport. May additionally display a raft-association independent effect on budding. Plays a role in the determination of host range restriction on replication and virulence. Sialidase activity in late endosome/lysosome traffic seems to enhance virus replication. The chain is Neuraminidase from Influenza B virus (strain B/Maryland/1959).